Consider the following 466-residue polypeptide: MENTRRSFLKKVSAAGIGAAGLAMAGNAGATTTAAEPQKKKTAGKDDGKLRFGFIGTGSRCHEHINNVLAIPGNKIVAICDIQQGPIDSTLKHIAKFNVPAPKVYKGGEREFENMLNNEEFDCVIIASPWEWHVPMSVAAMKAGVPYVGVEVSAANTLEECWDLVNVSEATGSHLNIMENVCYRRDCMAALNMVRQGLFGEILHGGCGYEHDLREVKFNDGTHYNYVPGSGDLRMGPTAFAEAQWRTNHSVHRNGDIYPTHGIGPIAHCMDINRGNRFLSLSAMATQSRGLHKFIVDNGGENHPLAKVNFNLGDIVTSMIKCSNGQTIIVTHDTNSPRPYSLGFRVQGTEGLWMNDGDHVYVQGKSKPHRWDDSDEWFKKYDHKLWASLESQAAEAGHGGMDYIMMYDLIDAIRNKKPAPMDCYDAAAWSAISGLSEMSIARGGALVDFPDFTRGQWIHRQPQFAL.

Residues 1–30 (MENTRRSFLKKVSAAGIGAAGLAMAGNAGA) constitute a signal peptide (tat-type signal). NAD(+) contacts are provided by residues 59–60 (SR), Asp81, 130–133 (WEWH), 151–152 (EV), and Asn180. Tyr209 is a substrate binding site. Residue 241 to 245 (AEAQW) participates in NAD(+) binding. Residues Arg246, 258–261 (YPTH), and Tyr340 each bind substrate. Residue Tyr258 coordinates NAD(+).

The protein belongs to the Gfo/Idh/MocA family. Glycosyl hydrolase 109 subfamily. NAD(+) is required as a cofactor. Post-translationally, predicted to be exported by the Tat system. The position of the signal peptide cleavage has not been experimentally proven.

Its function is as follows. Glycosidase. The protein is Glycosyl hydrolase family 109 protein of Parabacteroides distasonis (strain ATCC 8503 / DSM 20701 / CIP 104284 / JCM 5825 / NCTC 11152).